A 431-amino-acid polypeptide reads, in one-letter code: Putative F-box/FBD/LRR-repeat protein At3g56780 (431 aa).

Residues 6-62 (CSCINELPDDLILKILSFVSTKHVVVTSLLSKKWKSLWTRVPILKYDVRDHTRFERF) enclose the F-box domain. 8 LRR repeats span residues 56-82 (HTRF…HVEL), 88-113 (NKDI…EIDA), 135-161 (LKGI…HIDH), 162-187 (SSLF…MVIR), 209-236 (LEGL…HVAR), 237-262 (MEDF…TLEE), 264-285 (TSDV…SIIT), and 357-382 (CSER…KLEH). The 33-residue stretch at 391–423 (RWEPPSLVPECLLSSLEALEWKGYTGRYGDKDL) folds into the FBD domain.

This chain is Putative F-box/FBD/LRR-repeat protein At3g56780, found in Arabidopsis thaliana (Mouse-ear cress).